A 610-amino-acid chain; its full sequence is ABC transporter ATP-binding protein ARB1 (610 aa).

Residues 1 to 43 form a disordered region; the sequence is MPPVSASKAKRDAKKAEREAKKAAAGKTIRKLGRKKEAAAEES. Serine 43 and serine 65 each carry phosphoserine. 2 consecutive ABC transporter domains span residues 82–323 and 393–610; these read IKLS…TNQM and LAFD…NVVL. An ATP-binding site is contributed by 114-121; sequence GENGCGKS. A Phosphoserine modification is found at serine 196. Residue 428-435 participates in ATP binding; it reads GPNGVGKS. Phosphothreonine is present on threonine 446.

This sequence belongs to the ABC transporter superfamily. ABCF family. EF3 subfamily. Interacts with LSG1.

Its subcellular location is the cytoplasm. It localises to the nucleus. The enzyme catalyses ATP + H2O = ADP + phosphate + H(+). Its function is as follows. ATPase that stimulates 40S and 60S ribosome biogenesis. Also involved in ribosome-associated quality control (RQC) pathway, a pathway that mediates ubiquitination and extraction of incompletely synthesized nascent chains for proteasomal degradation: localizes to the ribosomal E-site and stimulates VMS1-dependent tRNA cleavage. In Saccharomyces cerevisiae (strain ATCC 204508 / S288c) (Baker's yeast), this protein is ABC transporter ATP-binding protein ARB1 (ARB1).